Consider the following 571-residue polypeptide: Quinone-dependent D-lactate dehydrogenase (571 aa).

In terms of domain architecture, FAD-binding PCMH-type spans Gly-42 to Asp-213. FAD contacts are provided by residues Ala-76–Gly-80, Gly-84–Ser-85, Gly-143, Ser-150, Gly-160, and Val-262. The interval Arg-546–Glu-571 is disordered.

This sequence belongs to the quinone-dependent D-lactate dehydrogenase family. FAD serves as cofactor.

The protein localises to the cell inner membrane. It carries out the reaction (R)-lactate + a quinone = a quinol + pyruvate. With respect to regulation, inhibited by 2-hydroxy-3-butynoic acid, but not by p-chloromercuribenzoate, n-ethylmaleimide, or 5,5'-dithiobis(2-nitrobenzoic acid). Catalyzes the oxidation of D-lactate to pyruvate. Electrons derived from D-lactate oxidation are transferred to the ubiquinone/cytochrome electron transfer chain, where they may be used to provide energy for the active transport of a variety of amino acids and sugars across the membrane. In Escherichia coli (strain K12), this protein is Quinone-dependent D-lactate dehydrogenase.